Reading from the N-terminus, the 375-residue chain is Alanine racemase (375 aa).

The active-site Proton acceptor; specific for D-alanine is the Lys41. At Lys41 the chain carries N6-(pyridoxal phosphate)lysine. Arg141 lines the substrate pocket. Catalysis depends on Tyr270, which acts as the Proton acceptor; specific for L-alanine. Met317 is a binding site for substrate.

Belongs to the alanine racemase family. Pyridoxal 5'-phosphate serves as cofactor.

The enzyme catalyses L-alanine = D-alanine. Its pathway is amino-acid biosynthesis; D-alanine biosynthesis; D-alanine from L-alanine: step 1/1. In terms of biological role, catalyzes the interconversion of L-alanine and D-alanine. May also act on other amino acids. The polypeptide is Alanine racemase (alr) (Lactiplantibacillus plantarum (strain ATCC BAA-793 / NCIMB 8826 / WCFS1) (Lactobacillus plantarum)).